A 210-amino-acid chain; its full sequence is Cytochrome c biogenesis ATP-binding export protein CcmA (210 aa).

The ABC transporter domain maps to 3–205 (LHLQAAGLAC…KPSGYRELNL (203 aa)). ATP is bound at residue 37–44 (GPNGSGKT).

This sequence belongs to the ABC transporter superfamily. CcmA exporter (TC 3.A.1.107) family. In terms of assembly, the complex is composed of two ATP-binding proteins (CcmA) and two transmembrane proteins (CcmB).

The protein resides in the cell inner membrane. The enzyme catalyses heme b(in) + ATP + H2O = heme b(out) + ADP + phosphate + H(+). Functionally, part of the ABC transporter complex CcmAB involved in the biogenesis of c-type cytochromes; once thought to export heme, this seems not to be the case, but its exact role is uncertain. Responsible for energy coupling to the transport system. The protein is Cytochrome c biogenesis ATP-binding export protein CcmA of Pseudomonas putida (strain ATCC 47054 / DSM 6125 / CFBP 8728 / NCIMB 11950 / KT2440).